A 257-amino-acid polypeptide reads, in one-letter code: Adenylate kinase (257 aa).

52–57 contacts ATP; the sequence is GAGKGT. An NMP region spans residues 72–101; sequence ATGDMLRSQVAKKTELGKEAKKIMDQGGLV. AMP-binding positions include Thr73, Arg78, 99–101, 128–131, and Gln135; these read GLV and GFPR. The segment at 169-206 is LID; that stretch reads GRLVHPASGRSYHKIFNPPKNDMKDDVTGEPLIQRSDD. ATP-binding positions include Arg170 and 179–180; that span reads SY. Positions 203 and 214 each coordinate AMP. Gln242 serves as a coordination point for ATP.

Belongs to the adenylate kinase family. AK2 subfamily. As to quaternary structure, monomer.

Its subcellular location is the cytoplasm. The protein resides in the cytosol. It localises to the mitochondrion intermembrane space. The catalysed reaction is AMP + ATP = 2 ADP. Catalyzes the reversible transfer of the terminal phosphate group between ATP and AMP. Plays an important role in cellular energy homeostasis and in adenine nucleotide metabolism. Adenylate kinase activity is critical for regulation of the phosphate utilization and the AMP de novo biosynthesis pathways. In Aspergillus fumigatus (strain CBS 144.89 / FGSC A1163 / CEA10) (Neosartorya fumigata), this protein is Adenylate kinase (adk1).